The primary structure comprises 366 residues: Succinyl-diaminopimelate desuccinylase (366 aa).

Zn(2+) is bound at residue H66. The active site involves D68. D97 lines the Zn(2+) pocket. Catalysis depends on E127, which acts as the Proton acceptor. The Zn(2+) site is built by E128, E156, and H341.

The protein belongs to the peptidase M20A family. DapE subfamily. In terms of assembly, homodimer. It depends on Zn(2+) as a cofactor. The cofactor is Co(2+).

It catalyses the reaction N-succinyl-(2S,6S)-2,6-diaminopimelate + H2O = (2S,6S)-2,6-diaminopimelate + succinate. It functions in the pathway amino-acid biosynthesis; L-lysine biosynthesis via DAP pathway; LL-2,6-diaminopimelate from (S)-tetrahydrodipicolinate (succinylase route): step 3/3. Catalyzes the hydrolysis of N-succinyl-L,L-diaminopimelic acid (SDAP), forming succinate and LL-2,6-diaminopimelate (DAP), an intermediate involved in the bacterial biosynthesis of lysine and meso-diaminopimelic acid, an essential component of bacterial cell walls. The sequence is that of Succinyl-diaminopimelate desuccinylase from Aliarcobacter butzleri (strain RM4018) (Arcobacter butzleri).